Here is a 196-residue protein sequence, read N- to C-terminus: Holliday junction branch migration complex subunit RuvA (196 aa).

The domain I stretch occupies residues 1-65; it reads MIGNLSGTVD…ENTTQLYGFI (65 aa). A domain II region spans residues 66-143; the sequence is NKEEQSCLRL…KLETNNNNFY (78 aa). Positions 144–147 are flexible linker; it reads PINE. The interval 147–196 is domain III; that stretch reads EDAVSALINLGYEKTKVYDTIKKYKPNLDTKDIIRTALKELSNYEIDIMQ.

This sequence belongs to the RuvA family. As to quaternary structure, homotetramer. Forms an RuvA(8)-RuvB(12)-Holliday junction (HJ) complex. HJ DNA is sandwiched between 2 RuvA tetramers; dsDNA enters through RuvA and exits via RuvB. An RuvB hexamer assembles on each DNA strand where it exits the tetramer. Each RuvB hexamer is contacted by two RuvA subunits (via domain III) on 2 adjacent RuvB subunits; this complex drives branch migration. In the full resolvosome a probable DNA-RuvA(4)-RuvB(12)-RuvC(2) complex forms which resolves the HJ.

The protein localises to the cytoplasm. In terms of biological role, the RuvA-RuvB-RuvC complex processes Holliday junction (HJ) DNA during genetic recombination and DNA repair, while the RuvA-RuvB complex plays an important role in the rescue of blocked DNA replication forks via replication fork reversal (RFR). RuvA specifically binds to HJ cruciform DNA, conferring on it an open structure. The RuvB hexamer acts as an ATP-dependent pump, pulling dsDNA into and through the RuvAB complex. HJ branch migration allows RuvC to scan DNA until it finds its consensus sequence, where it cleaves and resolves the cruciform DNA. This chain is Holliday junction branch migration complex subunit RuvA, found in Wolbachia sp. subsp. Brugia malayi (strain TRS).